Reading from the N-terminus, the 206-residue chain is Triosephosphate isomerase (206 aa).

The Electrophile role is filled by histidine 76. Glutamate 146 serves as the catalytic Proton acceptor.

Belongs to the triosephosphate isomerase family. In terms of assembly, homodimer.

It carries out the reaction D-glyceraldehyde 3-phosphate = dihydroxyacetone phosphate. The protein operates within carbohydrate biosynthesis; gluconeogenesis. It functions in the pathway carbohydrate degradation; glycolysis; D-glyceraldehyde 3-phosphate from glycerone phosphate: step 1/1. This Anopheles merus (Mosquito) protein is Triosephosphate isomerase (Tpi).